Here is a 278-residue protein sequence, read N- to C-terminus: MAIYAIGDIQGCYDEFQQLLKEIHFDEQADQLWLAGDLVNRGPKSLEVIRFVHGLGKRAITVLGNHDLHLLAVAAGLQPLHSKDTLAAILSAPDREELITWLRHLPLLYRNSKLGITLIHAGLPPQWDIATAESCARELEAVLQGPNWRDFLAHMYGDKPVQWRDDLKGWERLRTISNCLTRLRYCDAKGRFSLKFKESPGTQTKGGLMPWFKVPHRASHGERIVFGHWATLEVGPYEGPVFALDGGCVWGGQLVALRLDKEEPQWFFVDCQGYSKIT.

It belongs to the Ap4A hydrolase family.

The catalysed reaction is P(1),P(4)-bis(5'-adenosyl) tetraphosphate + H2O = 2 ADP + 2 H(+). Its function is as follows. Hydrolyzes diadenosine 5',5'''-P1,P4-tetraphosphate to yield ADP. The chain is Bis(5'-nucleosyl)-tetraphosphatase, symmetrical from Nitrosococcus oceani (strain ATCC 19707 / BCRC 17464 / JCM 30415 / NCIMB 11848 / C-107).